The chain runs to 557 residues: Dihydroxy-acid dehydratase 2 (557 aa).

[2Fe-2S] cluster is bound at residue C50. D82 contributes to the Mg(2+) binding site. C123 contributes to the [2Fe-2S] cluster binding site. Mg(2+)-binding residues include D124 and K125. K125 is modified (N6-carboxylysine). C195 contributes to the [2Fe-2S] cluster binding site. E447 is a Mg(2+) binding site. The Proton acceptor role is filled by S473.

It belongs to the IlvD/Edd family. As to quaternary structure, homodimer. The cofactor is [2Fe-2S] cluster. Requires Mg(2+) as cofactor.

It carries out the reaction (2R)-2,3-dihydroxy-3-methylbutanoate = 3-methyl-2-oxobutanoate + H2O. The catalysed reaction is (2R,3R)-2,3-dihydroxy-3-methylpentanoate = (S)-3-methyl-2-oxopentanoate + H2O. It participates in amino-acid biosynthesis; L-isoleucine biosynthesis; L-isoleucine from 2-oxobutanoate: step 3/4. It functions in the pathway amino-acid biosynthesis; L-valine biosynthesis; L-valine from pyruvate: step 3/4. In terms of biological role, functions in the biosynthesis of branched-chain amino acids. Catalyzes the dehydration of (2R,3R)-2,3-dihydroxy-3-methylpentanoate (2,3-dihydroxy-3-methylvalerate) into 2-oxo-3-methylpentanoate (2-oxo-3-methylvalerate) and of (2R)-2,3-dihydroxy-3-methylbutanoate (2,3-dihydroxyisovalerate) into 2-oxo-3-methylbutanoate (2-oxoisovalerate), the penultimate precursor to L-isoleucine and L-valine, respectively. The sequence is that of Dihydroxy-acid dehydratase 2 from Burkholderia lata (strain ATCC 17760 / DSM 23089 / LMG 22485 / NCIMB 9086 / R18194 / 383).